We begin with the raw amino-acid sequence, 218 residues long: DNA endonuclease I-CeuI (218 aa).

G65 and E66 together coordinate Mg(2+). Residues I71–K75 are interaction with DNA. D86 contacts Mg(2+). Interaction with DNA stretches follow at residues N90 to H94, R114 to K116, and K191 to G199.

It belongs to the LAGLIDADG endonuclease family. As to quaternary structure, homodimer. Mg(2+) serves as cofactor.

Its subcellular location is the plastid. The protein localises to the chloroplast. Its function is as follows. Endonuclease involved in intron homing. Recognizes a degenerate sequence of 17-19 bp to produce a staggered cut 5 bp downstream from the CeLSU.5 intron insertion site. This chain is DNA endonuclease I-CeuI, found in Chlamydomonas moewusii (Chlamydomonas eugametos).